A 189-amino-acid chain; its full sequence is dCTP deaminase (189 aa).

Residues 112 to 117 (KSTYAR), 136 to 138 (TLE), glutamine 157, tyrosine 171, and glutamine 181 contribute to the dCTP site. Residue glutamate 138 is the Proton donor/acceptor of the active site.

Belongs to the dCTP deaminase family. As to quaternary structure, homotrimer.

The catalysed reaction is dCTP + H2O + H(+) = dUTP + NH4(+). The protein operates within pyrimidine metabolism; dUMP biosynthesis; dUMP from dCTP (dUTP route): step 1/2. Functionally, catalyzes the deamination of dCTP to dUTP. The chain is dCTP deaminase from Acinetobacter baylyi (strain ATCC 33305 / BD413 / ADP1).